Here is a 601-residue protein sequence, read N- to C-terminus: Elongation factor 4 (601 aa).

Residues 5–187 enclose the tr-type G domain; that stretch reads ENIRNFCIIA…AIVHHLPAPK (183 aa). GTP contacts are provided by residues 17–22 and 134–137; these read DHGKST and NKID.

The protein belongs to the TRAFAC class translation factor GTPase superfamily. Classic translation factor GTPase family. LepA subfamily.

Its subcellular location is the cell inner membrane. The catalysed reaction is GTP + H2O = GDP + phosphate + H(+). Functionally, required for accurate and efficient protein synthesis under certain stress conditions. May act as a fidelity factor of the translation reaction, by catalyzing a one-codon backward translocation of tRNAs on improperly translocated ribosomes. Back-translocation proceeds from a post-translocation (POST) complex to a pre-translocation (PRE) complex, thus giving elongation factor G a second chance to translocate the tRNAs correctly. Binds to ribosomes in a GTP-dependent manner. This chain is Elongation factor 4, found in Desulfovibrio desulfuricans (strain ATCC 27774 / DSM 6949 / MB).